Here is a 632-residue protein sequence, read N- to C-terminus: DNA mismatch repair protein MutL (632 aa).

It belongs to the DNA mismatch repair MutL/HexB family.

Its function is as follows. This protein is involved in the repair of mismatches in DNA. It is required for dam-dependent methyl-directed DNA mismatch repair. May act as a 'molecular matchmaker', a protein that promotes the formation of a stable complex between two or more DNA-binding proteins in an ATP-dependent manner without itself being part of a final effector complex. This is DNA mismatch repair protein MutL from Pseudomonas putida (strain GB-1).